Consider the following 517-residue polypeptide: Ribose import ATP-binding protein RbsA 2 (517 aa).

ABC transporter domains lie at 10 to 245 (LRIE…GRSI) and 255 to 498 (DAGE…VSTH). Residue 42–49 (GENGAGKS) participates in ATP binding. The disordered stretch occupies residues 497-517 (THTGNSPHSGGTDGTEASRGH).

The protein belongs to the ABC transporter superfamily. Ribose importer (TC 3.A.1.2.1) family. The complex is composed of an ATP-binding protein (RbsA), two transmembrane proteins (RbsC) and a solute-binding protein (RbsB).

The protein resides in the cell membrane. It carries out the reaction D-ribose(out) + ATP + H2O = D-ribose(in) + ADP + phosphate + H(+). Part of the ABC transporter complex RbsABC involved in ribose import. Responsible for energy coupling to the transport system. This chain is Ribose import ATP-binding protein RbsA 2, found in Streptomyces coelicolor (strain ATCC BAA-471 / A3(2) / M145).